The following is a 254-amino-acid chain: Type III pantothenate kinase (254 aa).

Position 22–29 (22–29) interacts with ATP; sequence VLGNTHVR. Substrate contacts are provided by residues Y89 and 93–96; that span reads GLDR. D95 serves as the catalytic Proton acceptor. Residue D115 coordinates K(+). T118 lines the ATP pocket. A substrate-binding site is contributed by T173.

The protein belongs to the type III pantothenate kinase family. Homodimer. It depends on NH4(+) as a cofactor. K(+) is required as a cofactor.

The protein resides in the cytoplasm. It carries out the reaction (R)-pantothenate + ATP = (R)-4'-phosphopantothenate + ADP + H(+). It functions in the pathway cofactor biosynthesis; coenzyme A biosynthesis; CoA from (R)-pantothenate: step 1/5. Catalyzes the phosphorylation of pantothenate (Pan), the first step in CoA biosynthesis. The chain is Type III pantothenate kinase from Synechococcus sp. (strain JA-2-3B'a(2-13)) (Cyanobacteria bacterium Yellowstone B-Prime).